The primary structure comprises 622 residues: Elongation factor 4 (622 aa).

In terms of domain architecture, tr-type G spans Ala-17–Val-201. GTP is bound by residues Asp-29–Thr-34 and Asn-148–Asp-151.

The protein belongs to the TRAFAC class translation factor GTPase superfamily. Classic translation factor GTPase family. LepA subfamily.

The protein resides in the cell membrane. It carries out the reaction GTP + H2O = GDP + phosphate + H(+). In terms of biological role, required for accurate and efficient protein synthesis under certain stress conditions. May act as a fidelity factor of the translation reaction, by catalyzing a one-codon backward translocation of tRNAs on improperly translocated ribosomes. Back-translocation proceeds from a post-translocation (POST) complex to a pre-translocation (PRE) complex, thus giving elongation factor G a second chance to translocate the tRNAs correctly. Binds to ribosomes in a GTP-dependent manner. This is Elongation factor 4 from Streptomyces avermitilis (strain ATCC 31267 / DSM 46492 / JCM 5070 / NBRC 14893 / NCIMB 12804 / NRRL 8165 / MA-4680).